The sequence spans 251 residues: MPHFAKPLLRNIITRNLFNSIKKKQCLQYLQTLRTLQYDGFTTVYFGETDIPESLVTGEDFSDGYYMPTPTWCVVHAGGSQGWVPWKYRMFLRDELCIKQEDNLFFEFCDVVKKAYGKCAIVVKERRRQDATRPKEGKETEAQAHVPSVVNLTSVTCCPEVAKSYGHKLLTLPSPYNYLNPLDSAWSSLKWFIINNRKEFCLQSVDGVYSYQYILFSDLISKGIERINLSKWRTITTKVRRWENYYLGKLS.

This sequence belongs to the FAM243 family.

This is an uncharacterized protein from Bos taurus (Bovine).